Here is a 204-residue protein sequence, read N- to C-terminus: Protein OPG030 (204 aa).

In terms of domain architecture, BACK spans 95–177 (FLRQYINNNI…ITYSELTNAI (83 aa)).

It belongs to the orthopoxvirus OPG030 family.

In Bos taurus (Bovine), this protein is Protein OPG030 (OPG30).